The following is a 202-amino-acid chain: Endoribonuclease YbeY (202 aa).

H120, H124, and H130 together coordinate Zn(2+).

This sequence belongs to the endoribonuclease YbeY family. Zn(2+) serves as cofactor.

Its subcellular location is the cytoplasm. In terms of biological role, single strand-specific metallo-endoribonuclease involved in late-stage 70S ribosome quality control and in maturation of the 3' terminus of the 16S rRNA. This is Endoribonuclease YbeY from Corynebacterium kroppenstedtii (strain DSM 44385 / JCM 11950 / CIP 105744 / CCUG 35717).